A 29-amino-acid chain; its full sequence is ATP synthase subunit 9, mitochondrial (29 aa).

Belongs to the ATPase C chain family. As to quaternary structure, F-type ATPases have 2 components, CF(1) - the catalytic core - and CF(0) - the membrane proton channel. CF(1) has five subunits: alpha(3), beta(3), gamma(1), delta(1), epsilon(1). CF(0) has three main subunits: a, b and c.

Its subcellular location is the mitochondrion membrane. Its function is as follows. Mitochondrial membrane ATP synthase (F(1)F(0) ATP synthase or Complex V) produces ATP from ADP in the presence of a proton gradient across the membrane which is generated by electron transport complexes of the respiratory chain. F-type ATPases consist of two structural domains, F(1) - containing the extramembraneous catalytic core and F(0) - containing the membrane proton channel, linked together by a central stalk and a peripheral stalk. During catalysis, ATP synthesis in the catalytic domain of F(1) is coupled via a rotary mechanism of the central stalk subunits to proton translocation. Part of the complex F(0) domain. A homomeric c-ring of probably 10 subunits is part of the complex rotary element. The chain is ATP synthase subunit 9, mitochondrial (ATP9) from Wickerhamomyces pijperi (Yeast).